The primary structure comprises 62 residues: Photosystem II reaction center protein Z (62 aa).

2 helical membrane passes run 8–28 (TLLA…VLLA) and 41–61 (FSGS…NSFV).

The protein belongs to the PsbZ family. In terms of assembly, PSII is composed of 1 copy each of membrane proteins PsbA, PsbB, PsbC, PsbD, PsbE, PsbF, PsbH, PsbI, PsbJ, PsbK, PsbL, PsbM, PsbT, PsbY, PsbZ, Psb30/Ycf12, at least 3 peripheral proteins of the oxygen-evolving complex and a large number of cofactors. It forms dimeric complexes.

Its subcellular location is the plastid. The protein localises to the chloroplast thylakoid membrane. May control the interaction of photosystem II (PSII) cores with the light-harvesting antenna, regulates electron flow through the 2 photosystem reaction centers. PSII is a light-driven water plastoquinone oxidoreductase, using light energy to abstract electrons from H(2)O, generating a proton gradient subsequently used for ATP formation. The sequence is that of Photosystem II reaction center protein Z from Ostreococcus tauri.